Reading from the N-terminus, the 147-residue chain is Large ribosomal subunit protein uL15 (147 aa).

The interval 1-65 (MQLHELKPAP…PLQRRLPKRG (65 aa)) is disordered. Gly residues-rich tracts occupy residues 21–31 (QGIGSGLGKTA) and 42–52 (SGGGVRPGFEG).

Belongs to the universal ribosomal protein uL15 family. Part of the 50S ribosomal subunit.

Binds to the 23S rRNA. This chain is Large ribosomal subunit protein uL15, found in Heliobacterium modesticaldum (strain ATCC 51547 / Ice1).